We begin with the raw amino-acid sequence, 158 residues long: Protein FAM177B (158 aa).

The segment covering 36 to 48 has biased composition (acidic residues); it reads EYSTEEEEEEEKE. Positions 36-59 are disordered; the sequence is EYSTEEEEEEEKEEQSTNSTLDPS.

Belongs to the FAM177 family.

This is Protein FAM177B (FAM177B) from Homo sapiens (Human).